The sequence spans 489 residues: Ulvan Lyase-PL25 (489 aa).

The signal sequence occupies residues 1–31 (MNLNKTLRKNSPSGYKALLTFSIICGLMATG). Residue cysteine 32 is the site of N-palmitoyl cysteine attachment. Residue cysteine 32 is the site of S-diacylglycerol cysteine attachment. Substrate is bound by residues asparagine 60 and asparagine 122. The active-site Proton donor is the histidine 123. Residues lysine 125 and histidine 143 each coordinate substrate. Residue tyrosine 188 is the Proton acceptor of the active site. Substrate is bound by residues arginine 204, histidine 208, and tyrosine 246. Position 208 (histidine 208) interacts with Zn(2+). Histidine 264, cysteine 266, and histidine 278 together coordinate Zn(2+). Histidine 278 is a binding site for substrate.

Belongs to the polysaccharide lyase 25 family.

It localises to the cell membrane. Ulvan lyase involved in ulvan degradation. Ulvan is the main polysaccharide component of the Ulvales (green seaweed) cell wall. It is composed of disaccharide building blocks comprising 3-sulfated rhamnose (Rha3S) linked to D-glucuronic acid (GlcA), L-iduronic acid (IduA), or D-xylose (Xyl). Ulvan lyase catalyzes the endolytic cleavage of the glycosidic bond between Rha3S and the uronic acids GlcA or IduA, producing oligosaccharides that have unsaturated 4-deoxy-L-threo-hex-4-enopyranosiduronic acid (deltaUA) at the non-reducing end. This results eventually in the degradation of the ulvan polysaccharide into deltaUA-Rha3S disaccharides and deltaUA-Rha3S-Xyl-Rha3S tetrasaccharides. This is Ulvan Lyase-PL25 from Pseudoalteromonas sp. (strain PLSV).